A 655-amino-acid polypeptide reads, in one-letter code: Probable replication restart protein PriA (655 aa).

Zn(2+) is bound by residues Cys368, Cys371, Cys377, Cys380, Cys396, Cys399, Cys408, and Cys411.

It belongs to the helicase family. PriA subfamily. In terms of assembly, component of the replication restart primosome. Requires Zn(2+) as cofactor.

In terms of biological role, initiates the restart of stalled replication forks, which reloads the replicative helicase on sites other than the origin of replication. Recognizes and binds to abandoned replication forks and remodels them to uncover a helicase loading site. Promotes assembly of the primosome at these replication forks. This is Probable replication restart protein PriA from Mycobacterium bovis (strain ATCC BAA-935 / AF2122/97).